The chain runs to 155 residues: Ribosomal RNA large subunit methyltransferase H (155 aa).

Residues Leu73, Gly104, and 123 to 128 contribute to the S-adenosyl-L-methionine site; that span reads LSRMTF.

It belongs to the RNA methyltransferase RlmH family. As to quaternary structure, homodimer.

Its subcellular location is the cytoplasm. It carries out the reaction pseudouridine(1915) in 23S rRNA + S-adenosyl-L-methionine = N(3)-methylpseudouridine(1915) in 23S rRNA + S-adenosyl-L-homocysteine + H(+). In terms of biological role, specifically methylates the pseudouridine at position 1915 (m3Psi1915) in 23S rRNA. The chain is Ribosomal RNA large subunit methyltransferase H from Methylococcus capsulatus (strain ATCC 33009 / NCIMB 11132 / Bath).